The primary structure comprises 248 residues: Ribonuclease PH (248 aa).

Phosphate is bound by residues arginine 86 and 124-126 (GTR).

The protein belongs to the RNase PH family. In terms of assembly, homohexameric ring arranged as a trimer of dimers.

The enzyme catalyses tRNA(n+1) + phosphate = tRNA(n) + a ribonucleoside 5'-diphosphate. Phosphorolytic 3'-5' exoribonuclease that plays an important role in tRNA 3'-end maturation. Removes nucleotide residues following the 3'-CCA terminus of tRNAs; can also add nucleotides to the ends of RNA molecules by using nucleoside diphosphates as substrates, but this may not be physiologically important. Probably plays a role in initiation of 16S rRNA degradation (leading to ribosome degradation) during starvation. This Listeria monocytogenes serotype 4b (strain CLIP80459) protein is Ribonuclease PH.